A 266-amino-acid chain; its full sequence is Undecaprenyl-diphosphatase (266 aa).

8 helical membrane passes run 1–21 (MDFL…FIPV), 39–59 (PGSS…FWYF), 86–106 (SIFI…LFVT), 117–137 (FSIA…DIST), 153–173 (FIGI…GATI), 190–210 (SFLL…ITSI), 216–236 (FPFL…LLAI), and 246–266 (NGLK…ILNL).

Belongs to the UppP family.

It localises to the cell inner membrane. It catalyses the reaction di-trans,octa-cis-undecaprenyl diphosphate + H2O = di-trans,octa-cis-undecaprenyl phosphate + phosphate + H(+). Functionally, catalyzes the dephosphorylation of undecaprenyl diphosphate (UPP). Confers resistance to bacitracin. This Prochlorococcus marinus (strain MIT 9515) protein is Undecaprenyl-diphosphatase.